Here is a 147-residue protein sequence, read N- to C-terminus: Hemoglobin subunit beta (147 aa).

The Globin domain maps to 3 to 147 (EWTDKERSII…VVSALGKQYH (145 aa)). H64 and H93 together coordinate heme b.

The protein belongs to the globin family. Heterotetramer of two alpha chains and two beta chains. As to expression, red blood cells.

Its function is as follows. Involved in oxygen transport from gills to the various peripheral tissues. This is Hemoglobin subunit beta (hbb) from Trematomus hansoni (Striped rockcod).